Here is a 256-residue protein sequence, read N- to C-terminus: Eukaryotic translation initiation factor 3 subunit J (256 aa).

Composition is skewed to acidic residues over residues 1 to 14 (MAEN…DFEP) and 35 to 54 (EGED…EEAE). 2 disordered regions span residues 1–109 (MAEN…SPEE) and 214–237 (QSKA…MKND). The span at 55 to 101 (AATKQEAQKTVEPKVSEKKKLLEKIREKEKLHKKRQEEVNQQEKEGT) shows a compositional bias: basic and acidic residues. Positions 70-99 (SEKKKLLEKIREKEKLHKKRQEEVNQQEKE) form a coiled coil.

The protein belongs to the eIF-3 subunit J family. As to quaternary structure, component of the eukaryotic translation initiation factor 3 (eIF-3) complex, which is composed of 13 subunits: eif3a, eif3b, eif3c, eif3d, eif3e, eif3f, eif3g, eif3h, eif3i, eif3j, eif3k, eif3l and eif3m.

It localises to the cytoplasm. Functionally, component of the eukaryotic translation initiation factor 3 (eIF-3) complex, which is involved in protein synthesis of a specialized repertoire of mRNAs and, together with other initiation factors, stimulates binding of mRNA and methionyl-tRNAi to the 40S ribosome. The eIF-3 complex specifically targets and initiates translation of a subset of mRNAs involved in cell proliferation. The sequence is that of Eukaryotic translation initiation factor 3 subunit J (eif3j) from Xenopus tropicalis (Western clawed frog).